The following is a 324-amino-acid chain: Granaticin polyketide synthase bifunctional cyclase/dehydratase (324 aa).

Positions 1 to 21 are disordered; sequence MVQPAATPVSLPSPTVHRSEH.

It participates in antibiotic biosynthesis; granaticin biosynthesis. Its function is as follows. Is needed for correct cyclization of the oligoketide leading to isochromanequinone formation. The sequence is that of Granaticin polyketide synthase bifunctional cyclase/dehydratase (gra-orf4) from Streptomyces violaceoruber.